The following is a 212-amino-acid chain: Stromal cell-derived factor 2-like protein (212 aa).

Residues 1–19 (MKSLFLILILCITIPLIFA) form the signal peptide. N-linked (GlcNAc...) asparagine glycosylation occurs at asparagine 20. MIR domains lie at 29 to 86 (ITKV…IKGP), 94 to 149 (GTVV…VETE), and 151 to 206 (GKEW…TEEG).

The protein resides in the secreted. In Dictyostelium discoideum (Social amoeba), this protein is Stromal cell-derived factor 2-like protein.